A 156-amino-acid polypeptide reads, in one-letter code: UPF0251 protein Sfum_2819 (156 aa).

This sequence belongs to the UPF0251 family.

This Syntrophobacter fumaroxidans (strain DSM 10017 / MPOB) protein is UPF0251 protein Sfum_2819.